The following is a 252-amino-acid chain: Centromere protein V (252 aa).

The disordered stretch occupies residues 1–80; sequence MRRTRSAVAT…EEPPPAVTPA (80 aa). Residue serine 18 is modified to Phosphoserine. Omega-N-methylarginine is present on arginine 39. The segment covering 54–64 has biased composition (pro residues); that stretch reads SAKPRPKPPPR. Position 78 is a phosphothreonine (threonine 78). A CENP-V/GFA domain is found at 125–237; it reads HTGGCHCGAV…TEEFNGSDWE (113 aa). Residues cysteine 129, cysteine 131, cysteine 149, cysteine 151, cysteine 154, cysteine 193, and cysteine 196 each contribute to the Zn(2+) site. Serine 234 is subject to Phosphoserine.

This sequence belongs to the Gfa family. The cofactor is Zn(2+).

It is found in the chromosome. The protein resides in the centromere. The protein localises to the kinetochore. Its subcellular location is the nucleus. It localises to the cytoplasm. It is found in the cytoskeleton. The protein resides in the spindle. Its function is as follows. Required for distribution of pericentromeric heterochromatin in interphase nuclei and for centromere formation and organization, chromosome alignment and cytokinesis. This Mus musculus (Mouse) protein is Centromere protein V (Cenpv).